We begin with the raw amino-acid sequence, 147 residues long: Large ribosomal subunit protein uL13 (147 aa).

Belongs to the universal ribosomal protein uL13 family. In terms of assembly, part of the 50S ribosomal subunit.

In terms of biological role, this protein is one of the early assembly proteins of the 50S ribosomal subunit, although it is not seen to bind rRNA by itself. It is important during the early stages of 50S assembly. This Lactiplantibacillus plantarum (strain ATCC BAA-793 / NCIMB 8826 / WCFS1) (Lactobacillus plantarum) protein is Large ribosomal subunit protein uL13.